The primary structure comprises 60 residues: Large ribosomal subunit protein bL32 (60 aa).

Residues 1 to 23 (MAVPRNRHSNARKNIRRSHHAKK) form a disordered region.

Belongs to the bacterial ribosomal protein bL32 family.

The polypeptide is Large ribosomal subunit protein bL32 (Chlamydia caviae (strain ATCC VR-813 / DSM 19441 / 03DC25 / GPIC) (Chlamydophila caviae)).